A 187-amino-acid polypeptide reads, in one-letter code: Adenine phosphoribosyltransferase (187 aa).

Belongs to the purine/pyrimidine phosphoribosyltransferase family. Homodimer.

The protein resides in the cytoplasm. The catalysed reaction is AMP + diphosphate = 5-phospho-alpha-D-ribose 1-diphosphate + adenine. Its pathway is purine metabolism; AMP biosynthesis via salvage pathway; AMP from adenine: step 1/1. In terms of biological role, catalyzes a salvage reaction resulting in the formation of AMP, that is energically less costly than de novo synthesis. The polypeptide is Adenine phosphoribosyltransferase (Yersinia pseudotuberculosis serotype I (strain IP32953)).